Reading from the N-terminus, the 346-residue chain is NADH-quinone oxidoreductase subunit H 2 (346 aa).

8 consecutive transmembrane segments (helical) span residues 14-34 (IAMV…VAYA), 83-103 (FAFL…FAVI), 136-156 (VGVL…VLAG), 172-192 (SAQM…VFML), 208-228 (GAWY…CSIA), 260-280 (FFMA…TLFL), 289-309 (LPGW…CMWI), and 324-344 (LGWK…GIIV).

Belongs to the complex I subunit 1 family. As to quaternary structure, NDH-1 is composed of 14 different subunits. Subunits NuoA, H, J, K, L, M, N constitute the membrane sector of the complex.

The protein resides in the cell inner membrane. It catalyses the reaction a quinone + NADH + 5 H(+)(in) = a quinol + NAD(+) + 4 H(+)(out). Its function is as follows. NDH-1 shuttles electrons from NADH, via FMN and iron-sulfur (Fe-S) centers, to quinones in the respiratory chain. The immediate electron acceptor for the enzyme in this species is believed to be ubiquinone. Couples the redox reaction to proton translocation (for every two electrons transferred, four hydrogen ions are translocated across the cytoplasmic membrane), and thus conserves the redox energy in a proton gradient. This subunit may bind ubiquinone. The protein is NADH-quinone oxidoreductase subunit H 2 of Geobacter metallireducens (strain ATCC 53774 / DSM 7210 / GS-15).